Reading from the N-terminus, the 1661-residue chain is Mediator of RNA polymerase II transcription subunit 12 (1661 aa).

Disordered stretches follow at residues 1–22 (MSKT…VSNS), 524–550 (KDRR…ITGK), and 1501–1527 (DDMT…PDGT). Composition is skewed to polar residues over residues 7–22 (RNSL…VSNS), 539–548 (DTKNNYNSIT), and 1505–1527 (TDTS…PDGT).

It belongs to the Mediator complex subunit 12 family. In terms of assembly, component of the SRB8-11 complex, which itself associates with the Mediator complex.

It is found in the nucleus. Component of the SRB8-11 complex. The SRB8-11 complex is a regulatory module of the Mediator complex which is itself involved in regulation of basal and activated RNA polymerase II-dependent transcription. The SRB8-11 complex may be involved in the transcriptional repression of a subset of genes regulated by Mediator. It may inhibit the association of the Mediator complex with RNA polymerase II to form the holoenzyme complex. The polypeptide is Mediator of RNA polymerase II transcription subunit 12 (SRB8) (Debaryomyces hansenii (strain ATCC 36239 / CBS 767 / BCRC 21394 / JCM 1990 / NBRC 0083 / IGC 2968) (Yeast)).